We begin with the raw amino-acid sequence, 371 residues long: 4-hydroxy-3-methylbut-2-en-1-yl diphosphate synthase (flavodoxin) (371 aa).

The [4Fe-4S] cluster site is built by C270, C273, C305, and E312.

This sequence belongs to the IspG family. It depends on [4Fe-4S] cluster as a cofactor.

It catalyses the reaction (2E)-4-hydroxy-3-methylbut-2-enyl diphosphate + oxidized [flavodoxin] + H2O + 2 H(+) = 2-C-methyl-D-erythritol 2,4-cyclic diphosphate + reduced [flavodoxin]. The protein operates within isoprenoid biosynthesis; isopentenyl diphosphate biosynthesis via DXP pathway; isopentenyl diphosphate from 1-deoxy-D-xylulose 5-phosphate: step 5/6. In terms of biological role, converts 2C-methyl-D-erythritol 2,4-cyclodiphosphate (ME-2,4cPP) into 1-hydroxy-2-methyl-2-(E)-butenyl 4-diphosphate. The protein is 4-hydroxy-3-methylbut-2-en-1-yl diphosphate synthase (flavodoxin) of Shewanella baltica (strain OS223).